A 314-amino-acid polypeptide reads, in one-letter code: Malate dehydrogenase (314 aa).

NAD(+)-binding positions include 12–17 and aspartate 36; that span reads GAGFTG. Positions 87 and 93 each coordinate substrate. Residues asparagine 100 and 123–125 each bind NAD(+); that span reads LTN. Asparagine 125 contributes to the substrate binding site. Position 149 is a phosphoserine (serine 149). Residue arginine 156 participates in substrate binding. Catalysis depends on histidine 180, which acts as the Proton acceptor.

Belongs to the LDH/MDH superfamily. MDH type 3 family.

The catalysed reaction is (S)-malate + NAD(+) = oxaloacetate + NADH + H(+). Its function is as follows. Catalyzes the reversible oxidation of malate to oxaloacetate. This Halalkalibacterium halodurans (strain ATCC BAA-125 / DSM 18197 / FERM 7344 / JCM 9153 / C-125) (Bacillus halodurans) protein is Malate dehydrogenase.